The chain runs to 118 residues: Large ribosomal subunit protein uL18 (118 aa).

This sequence belongs to the universal ribosomal protein uL18 family. In terms of assembly, part of the 50S ribosomal subunit; part of the 5S rRNA/L5/L18/L25 subcomplex. Contacts the 5S and 23S rRNAs.

This is one of the proteins that bind and probably mediate the attachment of the 5S RNA into the large ribosomal subunit, where it forms part of the central protuberance. The chain is Large ribosomal subunit protein uL18 from Campylobacter concisus (strain 13826).